The primary structure comprises 719 residues: Protein Hook homolog 2 (719 aa).

A required for localization to the centrosome and induction of aggresome formation region spans residues 1–161; the sequence is MSVDKAELCG…ELMTKDTPDS (161 aa). Residues 1–548 are sufficient for interaction with microtubules; it reads MSVDKAELCG…LKRKLEEHLQ (548 aa). Residues 6 to 122 enclose the Calponin-homology (CH) domain; it reads AELCGSLLTW…KLLQLVLGCA (117 aa). Residue S163 is modified to Phosphoserine. Coiled-coil stretches lie at residues 180–427 and 455–607; these read LSEE…AQLQ and AELR…VDKA. The residue at position 230 (T230) is a Phosphothreonine. Residues 533–719 form a required for localization to the centrosome and induction of aggresome formation region; sequence DAISILLKRK…SLNLRPTDKH (187 aa). The segment at 584–719 is sufficient for interaction with CNTRL; the sequence is HNLQKKDADL…SLNLRPTDKH (136 aa). The segment at 696-719 is disordered; the sequence is LATNSRRGPLGRLASLNLRPTDKH. The residue at position 710 (S710) is a Phosphoserine.

This sequence belongs to the hook family. As to quaternary structure, self-associates. Component of the FTS/Hook/FHIP complex (FHF complex), composed of AKTIP/FTS, FHIP1B, and one or more members of the Hook family of proteins HOOK1, HOOK2, and HOOK3. May interact directly with AKTIP/FTS, HOOK1 and HOOK3. Associates with several subunits of the homotypic vesicular sorting complex (the HOPS complex) including VPS16 and VPS41; these interactions may be indirect. Interacts with CNTRL. Interacts with microtubules. Interacts with ZC3H14. Interacts with LRGUK (via guanylate kinase-like domain). Interacts with CCDC181. Interacts with AP4M1; the interaction is direct, mediates the interaction between FTS-Hook-FHIP (FHF) complex and AP-4 and the perinuclear distribution of AP-4.

The protein localises to the cytoplasm. Its subcellular location is the cytoskeleton. The protein resides in the microtubule organizing center. It is found in the centrosome. It localises to the golgi apparatus. The protein localises to the trans-Golgi network. In terms of biological role, component of the FTS/Hook/FHIP complex (FHF complex). The FHF complex may function to promote vesicle trafficking and/or fusion via the homotypic vesicular protein sorting complex (the HOPS complex). Contributes to the establishment and maintenance of centrosome function. May function in the positioning or formation of aggresomes, which are pericentriolar accumulations of misfolded proteins, proteasomes and chaperones. FHF complex promotes the distribution of AP-4 complex to the perinuclear area of the cell. This Homo sapiens (Human) protein is Protein Hook homolog 2 (HOOK2).